The chain runs to 312 residues: Homoserine O-succinyltransferase (312 aa).

The active-site Acyl-thioester intermediate is Cys-142. Substrate-binding residues include Lys-163 and Ser-192. Residue His-235 is the Proton acceptor of the active site. Glu-237 is an active-site residue. Arg-249 contacts substrate.

It belongs to the MetA family.

The protein localises to the cytoplasm. It catalyses the reaction L-homoserine + succinyl-CoA = O-succinyl-L-homoserine + CoA. It functions in the pathway amino-acid biosynthesis; L-methionine biosynthesis via de novo pathway; O-succinyl-L-homoserine from L-homoserine: step 1/1. Its function is as follows. Transfers a succinyl group from succinyl-CoA to L-homoserine, forming succinyl-L-homoserine. This Aliivibrio salmonicida (strain LFI1238) (Vibrio salmonicida (strain LFI1238)) protein is Homoserine O-succinyltransferase.